We begin with the raw amino-acid sequence, 1132 residues long: Telomerase reverse transcriptase (1132 aa).

A disordered region spans residues 1-66 (MSAKKPVQSK…NQNNANSGGN (66 aa)). Polar residues-rich tracts occupy residues 9–26 (SKLN…NRST) and 45–55 (QSQNTTTGAFR). One can recognise a Reverse transcriptase domain in the interval 602–956 (KEMRIFCESQ…DLFHWIGISI (355 aa)). Mg(2+)-binding residues include D708, D886, and D887.

This sequence belongs to the reverse transcriptase family. Telomerase subfamily.

The protein localises to the nucleus. It is found in the chromosome. It localises to the telomere. It carries out the reaction DNA(n) + a 2'-deoxyribonucleoside 5'-triphosphate = DNA(n+1) + diphosphate. Telomerase is a ribonucleoprotein enzyme essential for the replication of chromosome termini in most eukaryotes. It elongates telomeres. It is a reverse transcriptase that adds simple sequence repeats to chromosome ends by copying a template sequence within the RNA component of the enzyme. The protein is Telomerase reverse transcriptase (TERT) of Oxytricha trifallax (Sterkiella histriomuscorum).